The following is a 236-amino-acid chain: Small ribosomal subunit protein eS6 (236 aa).

Phosphoserine occurs at positions 232 and 233.

It belongs to the eukaryotic ribosomal protein eS6 family. Post-translationally, phosphorylated.

The chain is Small ribosomal subunit protein eS6 (RPS6) from Kluyveromyces lactis (strain ATCC 8585 / CBS 2359 / DSM 70799 / NBRC 1267 / NRRL Y-1140 / WM37) (Yeast).